The chain runs to 314 residues: Acetaldehyde dehydrogenase 4 (314 aa).

15–18 is a binding site for NAD(+); sequence SGNI. Cysteine 133 serves as the catalytic Acyl-thioester intermediate. Residues 164-172 and asparagine 292 contribute to the NAD(+) site; that span reads SAGPGTRAN.

Belongs to the acetaldehyde dehydrogenase family.

The enzyme catalyses acetaldehyde + NAD(+) + CoA = acetyl-CoA + NADH + H(+). This is Acetaldehyde dehydrogenase 4 from Burkholderia lata (strain ATCC 17760 / DSM 23089 / LMG 22485 / NCIMB 9086 / R18194 / 383).